We begin with the raw amino-acid sequence, 293 residues long: Acetyl-coenzyme A carboxylase carboxyl transferase subunit beta (293 aa).

The 265-residue stretch at 29–293 (LWRKCPRCEG…MGWPPLALDD (265 aa)) folds into the CoA carboxyltransferase N-terminal domain. Residues Cys-33, Cys-36, Cys-52, and Cys-55 each coordinate Zn(2+). A C4-type zinc finger spans residues 33-55 (CPRCEGVVYRPELDRNMDVCPKC).

The protein belongs to the AccD/PCCB family. In terms of assembly, acetyl-CoA carboxylase is a heterohexamer composed of biotin carboxyl carrier protein (AccB), biotin carboxylase (AccC) and two subunits each of ACCase subunit alpha (AccA) and ACCase subunit beta (AccD). Zn(2+) serves as cofactor.

Its subcellular location is the cytoplasm. The catalysed reaction is N(6)-carboxybiotinyl-L-lysyl-[protein] + acetyl-CoA = N(6)-biotinyl-L-lysyl-[protein] + malonyl-CoA. It participates in lipid metabolism; malonyl-CoA biosynthesis; malonyl-CoA from acetyl-CoA: step 1/1. In terms of biological role, component of the acetyl coenzyme A carboxylase (ACC) complex. Biotin carboxylase (BC) catalyzes the carboxylation of biotin on its carrier protein (BCCP) and then the CO(2) group is transferred by the transcarboxylase to acetyl-CoA to form malonyl-CoA. In Alcanivorax borkumensis (strain ATCC 700651 / DSM 11573 / NCIMB 13689 / SK2), this protein is Acetyl-coenzyme A carboxylase carboxyl transferase subunit beta.